Here is a 542-residue protein sequence, read N- to C-terminus: Formate--tetrahydrofolate ligase (542 aa).

53 to 60 lines the ATP pocket; that stretch reads TPAGEGKT.

The protein belongs to the formate--tetrahydrofolate ligase family.

It catalyses the reaction (6S)-5,6,7,8-tetrahydrofolate + formate + ATP = (6R)-10-formyltetrahydrofolate + ADP + phosphate. It functions in the pathway one-carbon metabolism; tetrahydrofolate interconversion. In Thermotoga maritima (strain ATCC 43589 / DSM 3109 / JCM 10099 / NBRC 100826 / MSB8), this protein is Formate--tetrahydrofolate ligase.